Consider the following 342-residue polypeptide: S-adenosylmethionine:tRNA ribosyltransferase-isomerase (342 aa).

Belongs to the QueA family. As to quaternary structure, monomer.

It is found in the cytoplasm. It catalyses the reaction 7-aminomethyl-7-carbaguanosine(34) in tRNA + S-adenosyl-L-methionine = epoxyqueuosine(34) in tRNA + adenine + L-methionine + 2 H(+). It functions in the pathway tRNA modification; tRNA-queuosine biosynthesis. Functionally, transfers and isomerizes the ribose moiety from AdoMet to the 7-aminomethyl group of 7-deazaguanine (preQ1-tRNA) to give epoxyqueuosine (oQ-tRNA). This Listeria monocytogenes serotype 4b (strain CLIP80459) protein is S-adenosylmethionine:tRNA ribosyltransferase-isomerase.